The primary structure comprises 294 residues: Acetylglutamate kinase (294 aa).

Substrate is bound by residues 63-64 (GG), R85, and N188.

The protein belongs to the acetylglutamate kinase family. ArgB subfamily.

Its subcellular location is the cytoplasm. It catalyses the reaction N-acetyl-L-glutamate + ATP = N-acetyl-L-glutamyl 5-phosphate + ADP. It functions in the pathway amino-acid biosynthesis; L-arginine biosynthesis; N(2)-acetyl-L-ornithine from L-glutamate: step 2/4. Catalyzes the ATP-dependent phosphorylation of N-acetyl-L-glutamate. This is Acetylglutamate kinase from Methanococcus maripaludis (strain DSM 14266 / JCM 13030 / NBRC 101832 / S2 / LL).